The primary structure comprises 348 residues: Phosphoribosylformylglycinamidine cyclo-ligase (348 aa).

Belongs to the AIR synthase family.

Its subcellular location is the cytoplasm. The catalysed reaction is 2-formamido-N(1)-(5-O-phospho-beta-D-ribosyl)acetamidine + ATP = 5-amino-1-(5-phospho-beta-D-ribosyl)imidazole + ADP + phosphate + H(+). It functions in the pathway purine metabolism; IMP biosynthesis via de novo pathway; 5-amino-1-(5-phospho-D-ribosyl)imidazole from N(2)-formyl-N(1)-(5-phospho-D-ribosyl)glycinamide: step 2/2. In Cereibacter sphaeroides (strain ATCC 17023 / DSM 158 / JCM 6121 / CCUG 31486 / LMG 2827 / NBRC 12203 / NCIMB 8253 / ATH 2.4.1.) (Rhodobacter sphaeroides), this protein is Phosphoribosylformylglycinamidine cyclo-ligase.